The sequence spans 1227 residues: DNA-directed RNA polymerase subunit beta (1227 aa).

This sequence belongs to the RNA polymerase beta chain family. The RNAP catalytic core consists of 2 alpha, 1 beta, 1 beta' and 1 omega subunit. When a sigma factor is associated with the core the holoenzyme is formed, which can initiate transcription.

It catalyses the reaction RNA(n) + a ribonucleoside 5'-triphosphate = RNA(n+1) + diphosphate. Functionally, DNA-dependent RNA polymerase catalyzes the transcription of DNA into RNA using the four ribonucleoside triphosphates as substrates. The chain is DNA-directed RNA polymerase subunit beta from Chloroflexus aggregans (strain MD-66 / DSM 9485).